The chain runs to 135 residues: NADH-quinone oxidoreductase subunit A (135 aa).

Helical transmembrane passes span 9–29 (YFPI…LLTV), 67–87 (VGML…WVVV), and 97–117 (LFGF…FFYI).

The protein belongs to the complex I subunit 3 family. In terms of assembly, NDH-1 is composed of 14 different subunits. Subunits NuoA, H, J, K, L, M, N constitute the membrane sector of the complex.

It localises to the cell inner membrane. It carries out the reaction a quinone + NADH + 5 H(+)(in) = a quinol + NAD(+) + 4 H(+)(out). In terms of biological role, NDH-1 shuttles electrons from NADH, via FMN and iron-sulfur (Fe-S) centers, to quinones in the respiratory chain. The immediate electron acceptor for the enzyme in this species is believed to be ubiquinone. Couples the redox reaction to proton translocation (for every two electrons transferred, four hydrogen ions are translocated across the cytoplasmic membrane), and thus conserves the redox energy in a proton gradient. In Solibacter usitatus (strain Ellin6076), this protein is NADH-quinone oxidoreductase subunit A.